We begin with the raw amino-acid sequence, 281 residues long: 2-dehydro-3-deoxyphosphooctonate aldolase (281 aa).

It belongs to the KdsA family.

The protein localises to the cytoplasm. The enzyme catalyses D-arabinose 5-phosphate + phosphoenolpyruvate + H2O = 3-deoxy-alpha-D-manno-2-octulosonate-8-phosphate + phosphate. It participates in carbohydrate biosynthesis; 3-deoxy-D-manno-octulosonate biosynthesis; 3-deoxy-D-manno-octulosonate from D-ribulose 5-phosphate: step 2/3. Its pathway is bacterial outer membrane biogenesis; lipopolysaccharide biosynthesis. The protein is 2-dehydro-3-deoxyphosphooctonate aldolase of Janthinobacterium sp. (strain Marseille) (Minibacterium massiliensis).